A 391-amino-acid chain; its full sequence is Nucleosome assembly protein 1-like 1 (391 aa).

Residues 1–10 (MADIDNKEQS) show a composition bias toward basic and acidic residues. Positions 1–32 (MADIDNKEQSELDQDLDDVEEVEEEETGEETK) are disordered. An N-acetylalanine modification is found at Ala2. The residue at position 10 (Ser10) is a Phosphoserine. Acidic residues predominate over residues 11-28 (ELDQDLDDVEEVEEEETG). Phosphothreonine is present on residues Thr62 and Thr64. Ser69 carries the phosphoserine modification. Lys116 carries the N6-acetyllysine modification. The NAP1L motif motif lies at 125–150 (YEPTEEECEWKPDEEDEISEELKEKA). The span at 132–143 (CEWKPDEEDEIS) shows a compositional bias: acidic residues. The interval 132–163 (CEWKPDEEDEISEELKEKAKVEDEKKDEEKED) is disordered. Ser143 carries the post-translational modification Phosphoserine. Residues 144–163 (EELKEKAKVEDEKKDEEKED) show a composition bias toward basic and acidic residues. Positions 273 to 279 (IKKKQKH) match the Nuclear localization signal motif. Positions 345 to 391 (EAIEDDDDDYDEEGEEADEEGEEEGDEENDPDYDPKKDQNPAECKQQ) are disordered. Residues 346 to 376 (AIEDDDDDYDEEGEEADEEGEEEGDEENDPD) show a composition bias toward acidic residues. Residues Glu359 and Glu360 each carry the 5-glutamyl polyglycine modification. Over residues 377-391 (YDPKKDQNPAECKQQ) the composition is skewed to basic and acidic residues. Cys388 is subject to Cysteine methyl ester. Cys388 carries S-farnesyl cysteine lipidation. The propeptide at 389-391 (KQQ) is removed in mature form.

It belongs to the nucleosome assembly protein (NAP) family. Homodimer. The dimer binds strongly and sequentially to single and double H2A-H2B heterodimers. Interacts with ERCC6; this interaction increases ERCC6 processivity. Interacts with RAD54. Interacts with SETD1A. Post-translationally, polyglycylated by TTLL10 on glutamate residues, resulting in polyglycine chains on the gamma-carboxyl group. Both polyglutamylation and polyglycylation modifications can coexist on the same protein on adjacent residues, and lowering polyglycylation levels increases polyglutamylation, and reciprocally. Polyglutamylated by TTLL4 on glutamate residues, resulting in polyglutamate chains on the gamma-carboxyl group. Both polyglutamylation and polyglycylation modifications can coexist on the same protein on adjacent residues, and lowering polyglycylation levels increases polyglutamylation, and reciprocally.

It is found in the nucleus. The protein localises to the melanosome. It localises to the cytoplasm. Histone chaperone that plays a role in the nuclear import of H2A-H2B and nucleosome assembly. Also participates in several important DNA repair mechanisms: greatly enhances ERCC6-mediated chromatin remodeling which is essential for transcription-coupled nucleotide excision DNA repair. Also stimulates homologous recombination (HR) by RAD51 and RAD54 which is essential in mitotic DNA double strand break (DSB) repair. Plays a key role in the regulation of embryonic neurogenesis. Promotes the proliferation of neural progenitors and inhibits neuronal differentiation during cortical development. Regulates neurogenesis via the modulation of RASSF10; regulates RASSF10 expression by promoting SETD1A-mediated H3K4 methylation at the RASSF10 promoter. The sequence is that of Nucleosome assembly protein 1-like 1 (NAP1L1) from Bos taurus (Bovine).